Consider the following 713-residue polypeptide: Phospholipase A1 PLIP2, chloroplastic (713 aa).

A chloroplast-targeting transit peptide spans 1–32; it reads MDSLCLNSGLHGVIPAITAVGNGGCGGVVEVR. Disordered stretches follow at residues 118–140 and 232–261; these read WKHE…DEEV and ALKA…EKNK. Residues 122–140 show a composition bias toward acidic residues; sequence EEEDDDEVEDEDGDEDEEV. The short motif at 426–430 is the GXSXG element; sequence GHSLG. Ser428 functions as the Acyl-ester intermediate in the catalytic mechanism. Residues Asp489 and His608 each act as charge relay system in the active site.

This sequence belongs to the AB hydrolase superfamily. Lipase family.

The protein resides in the plastid. It is found in the chloroplast membrane. Its subcellular location is the chloroplast stroma. The catalysed reaction is a 1,2-diacyl-3-O-(beta-D-galactosyl)-sn-glycerol + 2 H2O = 3-beta-D-galactosyl-sn-glycerol + 2 a fatty acid + 2 H(+). It carries out the reaction a 1,2-diacyl-sn-glycero-3-phosphocholine + H2O = a 2-acyl-sn-glycero-3-phosphocholine + a fatty acid + H(+). The enzyme catalyses 1-hexadecanoyl-2-(9Z-octadecenoyl)-sn-glycero-3-phosphocholine + H2O = 2-(9Z-octadecenoyl)-sn-glycero-3-phosphocholine + hexadecanoate + H(+). It catalyses the reaction 1,2-di-(9Z-octadecenoyl)-sn-glycero-3-phosphocholine + H2O = 2-(9Z-octadecenoyl)-sn-glycero-3-phosphocholine + (9Z)-octadecenoate + H(+). The catalysed reaction is 1-octadecanoyl-2-(9Z-octadecenoyl)-sn-glycero-3-phosphocholine + H2O = 2-(9Z-octadecenoyl)-sn-glycero-3-phosphocholine + octadecanoate + H(+). It carries out the reaction 1-octadecanoyl-2-(9Z,12Z)-octadecadienoyl-sn-glycero-3-phosphocholine + H2O = 2-(9Z,12Z-octadecadienoyl)-sn-glycero-3-phosphocholine + octadecanoate + H(+). The enzyme catalyses 1,2-di-(9Z,12Z-octadecadienoyl)-sn-glycero-3-phosphocholine + H2O = 2-(9Z,12Z-octadecadienoyl)-sn-glycero-3-phosphocholine + (9Z,12Z)-octadecadienoate + H(+). It catalyses the reaction 1-(9Z-octadecenoyl)-2-hexadecanoyl-sn-glycero-3-phosphocholine + H2O = 2-hexadecanoyl-sn-glycero-3-phosphocholine + (9Z)-octadecenoate + H(+). Its function is as follows. Sn-1-specific phospholipase A1 that catalyzes the initial step of oxylipins and jasmonate (JA) biosynthesis. Hydrolyzes polyunsaturated acyl groups preferentially from chloroplastic monogalactosyldiacylglycerol (MGDG). May function downstream of abscisic acid (ABA) and provide a link between ABA-mediated abiotic stress responses and oxylipin and JA signalings. In vitro, possesses broad substrate specificity. Can hydrolyze the galactolipids monogalactosyldiacylglycerol (MGDG) and digalactosyldiacylglycerol (DGDG), the sulfolipid sulfoquinovosyldiacylglycerol (SQDG), and the phoshpolipids phosphatidylcholine (PC), and phosphatidylglycerol (PG). This chain is Phospholipase A1 PLIP2, chloroplastic, found in Arabidopsis thaliana (Mouse-ear cress).